We begin with the raw amino-acid sequence, 280 residues long: Delta(3,5)-Delta(2,4)-dienoyl-CoA isomerase (280 aa).

Residue Glu-154 is the Proton donor/acceptor of the active site. A Peroxisome targeting signal (PTS1) motif is present at residues 278-280 (HKL).

This sequence belongs to the enoyl-CoA hydratase/isomerase family.

Its subcellular location is the cytoplasm. It is found in the cytosol. The protein resides in the peroxisome. It catalyses the reaction a (3E,5Z)-dienoyl-CoA = a (2E,4E)-(5,6-saturated)-dienoyl-CoA. It functions in the pathway lipid metabolism; fatty acid beta-oxidation. In terms of biological role, peroxisomal di-isomerase that is involved in fatty acid metabolism enzyme by converting 3,5-dienoyl-CoAs to the corresponding 2,4-dienoyl-CoAs. Involved in fatty acid beta-oxidation, which is important for lipid droplets degradation and infectious growth. This is Delta(3,5)-Delta(2,4)-dienoyl-CoA isomerase from Pyricularia oryzae (strain 70-15 / ATCC MYA-4617 / FGSC 8958) (Rice blast fungus).